The sequence spans 146 residues: UPF0306 protein HD_1359 (146 aa).

This sequence belongs to the UPF0306 family.

The protein is UPF0306 protein HD_1359 of Haemophilus ducreyi (strain 35000HP / ATCC 700724).